The chain runs to 394 residues: Glutamyl-tRNA reductase (394 aa).

Residues 45–48 (TCNR), Ser-99, 104–106 (EEQ), and Gln-110 contribute to the substrate site. The active-site Nucleophile is Cys-46. 175 to 180 (GLGNIG) is an NADP(+) binding site.

Belongs to the glutamyl-tRNA reductase family. In terms of assembly, homodimer.

It carries out the reaction (S)-4-amino-5-oxopentanoate + tRNA(Glu) + NADP(+) = L-glutamyl-tRNA(Glu) + NADPH + H(+). It participates in porphyrin-containing compound metabolism; protoporphyrin-IX biosynthesis; 5-aminolevulinate from L-glutamyl-tRNA(Glu): step 1/2. In terms of biological role, catalyzes the NADPH-dependent reduction of glutamyl-tRNA(Glu) to glutamate 1-semialdehyde (GSA). This Caldicellulosiruptor saccharolyticus (strain ATCC 43494 / DSM 8903 / Tp8T 6331) protein is Glutamyl-tRNA reductase.